A 353-amino-acid polypeptide reads, in one-letter code: Inositol 3-kinase (353 aa).

ATP is bound by residues S197, 247–250 (GAGD), and N274. D250 acts as the Proton acceptor in catalysis.

It belongs to the carbohydrate kinase pfkB family.

It catalyses the reaction myo-inositol + ATP = 1D-myo-inositol 3-phosphate + ADP + H(+). Kinase that phosphorylates myo-inositol to produce multiple myo-inositol monophosphates. Participates in phytic acid biosynthesis in developing seeds. Phytic acid is the primary storage form of phosphorus in cereal grains and other plant seeds. The polypeptide is Inositol 3-kinase (Arabidopsis thaliana (Mouse-ear cress)).